The chain runs to 322 residues: Acetylglutamate kinase (322 aa).

Substrate is bound by residues Gly-85–Gly-86, Arg-107, and Asn-211.

It belongs to the acetylglutamate kinase family. ArgB subfamily.

The protein resides in the cytoplasm. The catalysed reaction is N-acetyl-L-glutamate + ATP = N-acetyl-L-glutamyl 5-phosphate + ADP. It participates in amino-acid biosynthesis; L-arginine biosynthesis; N(2)-acetyl-L-ornithine from L-glutamate: step 2/4. Catalyzes the ATP-dependent phosphorylation of N-acetyl-L-glutamate. In Methanosarcina barkeri (strain Fusaro / DSM 804), this protein is Acetylglutamate kinase.